Reading from the N-terminus, the 315-residue chain is Putative S-adenosyl-L-methionine-dependent methyltransferase MAV_4557 (315 aa).

S-adenosyl-L-methionine is bound by residues D134 and 163–164 (DL).

It belongs to the UPF0677 family.

In terms of biological role, exhibits S-adenosyl-L-methionine-dependent methyltransferase activity. In Mycobacterium avium (strain 104), this protein is Putative S-adenosyl-L-methionine-dependent methyltransferase MAV_4557.